A 464-amino-acid chain; its full sequence is Myrosinase 1 (464 aa).

Residue glutamine 19 coordinates substrate. Zn(2+) contacts are provided by histidine 39 and aspartate 52. Substrate contacts are provided by histidine 122 and asparagine 166. Glutamate 167 serves as the catalytic Nucleophile. The active-site Proton donor is glutamate 374. Residue asparagine 397 is glycosylated (N-linked (GlcNAc...) asparagine).

As to quaternary structure, homodimer. In terms of tissue distribution, expressed in the skeletal muscle tissues surrounding the head, abdomen and thorax. Not expressed in flight muscles (at protein level).

It catalyses the reaction a thioglucoside + H2O = a sugar + a thiol.. Functionally, hydrolyzes glucosinolates to a labile aglycone. This rapidly undergoes spontaneous rearrangement, eliminating sulfur to yield a number of toxic metabolites. Thereby developing a chemical defense system that exploits and mimics the host plant. In Brevicoryne brassicae (Mealy cabbage aphid), this protein is Myrosinase 1.